The chain runs to 440 residues: Suppressor of cytokine signaling 4 (440 aa).

Residues 1-10 (MAENNENISK) are compositionally biased toward polar residues. The disordered stretch occupies residues 1–29 (MAENNENISKNVDVRPKTSRSRSADRKDG). Residues 12-29 (VDVRPKTSRSRSADRKDG) are compositionally biased toward basic and acidic residues. The region spanning 286–381 (CYWGVMDKYA…FFEPLLSTPL (96 aa)) is the SH2 domain. One can recognise an SOCS box domain in the interval 376–425 (LLSTPLIRTFPFSLQHICRTVICNCTTYDGIDALPIPSSMKLYLKEYHYK).

It functions in the pathway protein modification; protein ubiquitination. SOCS family proteins form part of a classical negative feedback system that regulates cytokine signal transduction. Substrate-recognition component of a SCF-like ECS (Elongin BC-CUL2/5-SOCS-box protein) E3 ubiquitin-protein ligase complex which mediates the ubiquitination and subsequent proteasomal degradation of target proteins. Inhibits EGF signaling by mediating the degradation of the Tyr-phosphorylated EGF receptor/EGFR. The sequence is that of Suppressor of cytokine signaling 4 (SOCS4) from Homo sapiens (Human).